The primary structure comprises 526 residues: MFS-type transporter clz19 (526 aa).

The segment at 1–49 (MNVDTTSPQAPLAGVESKQDGASNEATAKAESTTHDQNESSSFDERPVH) is disordered. A compositionally biased stretch (basic and acidic residues) spans 32 to 49 (STTHDQNESSSFDERPVH). A glycan (N-linked (GlcNAc...) asparagine) is linked at Asn-38. A helical transmembrane segment spans residues 59–79 (ALLAVASFAAAISPASTTTYY). Residue Asn-97 is glycosylated (N-linked (GlcNAc...) asparagine). The next 3 helical transmembrane spans lie at 126–143 (VYLV…GLAL), 186–206 (AYLT…GGLL), and 214–234 (AIFW…LTFF). N-linked (GlcNAc...) asparagine glycosylation is found at Asn-238 and Asn-253. The next 6 membrane-spanning stretches (helical) occupy residues 294 to 314 (FIVC…ISIF), 322 to 342 (YGYS…GSIL), 384 to 404 (LTVS…YGWL), 411 to 431 (VASV…VLIA), 446 to 466 (ALGA…VAAV), and 473 to 493 (IGIG…LPAL).

This sequence belongs to the major facilitator superfamily.

The protein localises to the membrane. Its function is as follows. MFS-type transporter; part of the gene cluster that mediates the biosynthesis of squalestatin S1 (SQS1, also known as zaragozic acid A), a heavily oxidized fungal polyketide that offers potent cholesterol lowering activity by targeting squalene synthase (SS). This chain is MFS-type transporter clz19, found in Cochliobolus lunatus (Filamentous fungus).